The chain runs to 304 residues: MIKQRTLKNVIRATGVGLHTGDIVYLTLRPAAVDTGIVFRRVDLDPPVEIKAREENVGDTTLSSTLVKEGVRIATVEHLLSAFAGLGIDNAYVDLNASEVPIMDGSAGPFVFLIQSAGIVQQEAPKRFILIKKTLLMEEEGKWARFEPFDGFKVSFVIDFDHPAFKGRPQGVEIDFSSTSFVKEVSRARTFGFMKDIERLREANLALGGSLNNAVVVDDYRVINEDGLRYEDEFARHKILDAIGDLYLLGHTLIGAFSGYKSGHALNNKLLCALMADKSAWEIVTFEDDETAAPILFTRPLTAA.

Residues His78, His237, and Asp241 each coordinate Zn(2+). His264 acts as the Proton donor in catalysis.

This sequence belongs to the LpxC family. The cofactor is Zn(2+).

It carries out the reaction a UDP-3-O-[(3R)-3-hydroxyacyl]-N-acetyl-alpha-D-glucosamine + H2O = a UDP-3-O-[(3R)-3-hydroxyacyl]-alpha-D-glucosamine + acetate. The protein operates within glycolipid biosynthesis; lipid IV(A) biosynthesis; lipid IV(A) from (3R)-3-hydroxytetradecanoyl-[acyl-carrier-protein] and UDP-N-acetyl-alpha-D-glucosamine: step 2/6. Functionally, catalyzes the hydrolysis of UDP-3-O-myristoyl-N-acetylglucosamine to form UDP-3-O-myristoylglucosamine and acetate, the committed step in lipid A biosynthesis. This chain is UDP-3-O-acyl-N-acetylglucosamine deacetylase, found in Nitrosococcus oceani (strain ATCC 19707 / BCRC 17464 / JCM 30415 / NCIMB 11848 / C-107).